The following is a 265-amino-acid chain: 3-methyl-2-oxobutanoate hydroxymethyltransferase (265 aa).

Mg(2+) is bound by residues aspartate 46 and aspartate 85. Residues 46 to 47, aspartate 85, and lysine 114 contribute to the 3-methyl-2-oxobutanoate site; that span reads DS. Mg(2+) is bound at residue glutamate 116. Glutamate 183 acts as the Proton acceptor in catalysis.

It belongs to the PanB family. In terms of assembly, homodecamer; pentamer of dimers. Requires Mg(2+) as cofactor.

It is found in the cytoplasm. It carries out the reaction 3-methyl-2-oxobutanoate + (6R)-5,10-methylene-5,6,7,8-tetrahydrofolate + H2O = 2-dehydropantoate + (6S)-5,6,7,8-tetrahydrofolate. The protein operates within cofactor biosynthesis; coenzyme A biosynthesis. Its function is as follows. Catalyzes the reversible reaction in which hydroxymethyl group from 5,10-methylenetetrahydrofolate is transferred onto alpha-ketoisovalerate to form ketopantoate. The chain is 3-methyl-2-oxobutanoate hydroxymethyltransferase from Caldivirga maquilingensis (strain ATCC 700844 / DSM 13496 / JCM 10307 / IC-167).